An 81-amino-acid polypeptide reads, in one-letter code: MWPPLLLLLLLLPAAPVPTAKAAPHPDANTQEGLQNLLQGVGAGGDGELRADSHLAPGSGCIDGAVVATRPESRGGRPAVP.

The signal sequence occupies residues 1–22 (MWPPLLLLLLLLPAAPVPTAKA).

It is found in the secreted. The chain is RBAK downstream neighbor protein (RBAKDN) from Homo sapiens (Human).